Here is a 147-residue protein sequence, read N- to C-terminus: Ubiquitin-conjugating enzyme E2 D3 (147 aa).

Residues 1 to 147 enclose the UBC core domain; it reads MALKRINKEL…SREWTQKYAM (147 aa). Cys21 and Cys107 form a disulfide bridge. The Glycyl thioester intermediate role is filled by Cys85.

This sequence belongs to the ubiquitin-conjugating enzyme family. As to quaternary structure, interacts with SCF (SKP1-CUL1-F-box protein) E3 ubiquitin ligase complex; when Cullin is neddylated, the interaction between the E2 and the SCF complex is strengthened. Interacts with DAPK3. Interacts with BRCA1; the DNA damage checkpoint promotes the association with BRCA1 after ionizing radiation. Interacts non-covalently with ubiquitin. Interacts with E3 ubiquitin-protein ligase CBLC. Interacts with UBTD1. Interacts with RIGI and RNF135; involved in RIGI ubiquitination and activation. In terms of processing, phosphorylated by AURKB.

It is found in the cell membrane. The protein resides in the endosome membrane. It carries out the reaction S-ubiquitinyl-[E1 ubiquitin-activating enzyme]-L-cysteine + [E2 ubiquitin-conjugating enzyme]-L-cysteine = [E1 ubiquitin-activating enzyme]-L-cysteine + S-ubiquitinyl-[E2 ubiquitin-conjugating enzyme]-L-cysteine.. The catalysed reaction is S-ubiquitinyl-[E1 ubiquitin-activating enzyme]-L-cysteine + [acceptor protein]-L-lysine = [E1 ubiquitin-activating enzyme]-L-cysteine + N(6)-monoubiquitinyl-[acceptor protein]-L-lysine.. Its pathway is protein modification; protein ubiquitination. In terms of biological role, accepts ubiquitin from the E1 complex and catalyzes its covalent attachment to other proteins. In vitro catalyzes 'Lys-11'-, as well as 'Lys-48'-linked polyubiquitination. Cooperates with the E2 CDC34 and the SCF(FBXW11) E3 ligase complex for the polyubiquitination of NFKBIA leading to its subsequent proteasomal degradation. Acts as an initiator E2, priming the phosphorylated NFKBIA target at positions 'Lys-21' and/or 'Lys-22' with a monoubiquitin. Ubiquitin chain elongation is then performed by CDC34, building ubiquitin chains from the UBE2D3-primed NFKBIA-linked ubiquitin. Also acts as an initiator E2, in conjunction with RNF8, for the priming of PCNA. Monoubiquitination of PCNA, and its subsequent polyubiquitination, are essential events in the operation of the DNA damage tolerance (DDT) pathway that is activated after DNA damage caused by UV or chemical agents during S-phase. Associates with the BRCA1/BARD1 E3 ligase complex to perform ubiquitination at DNA damage sites following ionizing radiation leading to DNA repair. Targets DAPK3 for ubiquitination which influences promyelocytic leukemia protein nuclear body (PML-NB) formation in the nucleus. In conjunction with the MDM2 and TOPORS E3 ligases, functions ubiquitination of p53/TP53. In conjunction with the CBL E3 ligase, targets EGFR for polyubiquitination at the plasma membrane as well as during its internalization and transport on endosomes. In conjunction with the STUB1 E3 quality control E3 ligase, ubiquitinates unfolded proteins to catalyze their immediate destruction. Together with RNF135, catalyzes the viral RNA-dependent 'Lys-63'-linked polyubiquitination of RIGI to activate the downstream signaling pathway that leads to interferon beta production. Together with ZNF598, catalyzes ubiquitination of 40S ribosomal proteins in response to ribosome collisions. In cooperation with the GATOR2 complex, catalyzes 'Lys-6'-linked ubiquitination of NPRL2. This Homo sapiens (Human) protein is Ubiquitin-conjugating enzyme E2 D3 (UBE2D3).